We begin with the raw amino-acid sequence, 200 residues long: MSRYTGPSWKLSRRLGISLSGTGKEIEKRPYAPGQHGPNQRKKLSEYGLQLQEKQKLRHMYGMNERQFRTLFNRAGKMKGVHGENFMILLETRLDNLVYRLGLARTRRGARQLVNHGHILVDGKRVDIPSFSVKPGQTISLREKSQNLAVVGEAIEVNNFVPDYLTFDADKKEGTFTRLPERSELSAEINESFIVEYYSR.

The disordered stretch occupies residues 22 to 41; it reads TGKEIEKRPYAPGQHGPNQR. The region spanning 92 to 152 is the S4 RNA-binding domain; it reads TRLDNLVYRL…EKSQNLAVVG (61 aa).

Belongs to the universal ribosomal protein uS4 family. As to quaternary structure, part of the 30S ribosomal subunit. Contacts protein S5. The interaction surface between S4 and S5 is involved in control of translational fidelity.

In terms of biological role, one of the primary rRNA binding proteins, it binds directly to 16S rRNA where it nucleates assembly of the body of the 30S subunit. Functionally, with S5 and S12 plays an important role in translational accuracy. This Lysinibacillus sphaericus (strain C3-41) protein is Small ribosomal subunit protein uS4.